Reading from the N-terminus, the 389-residue chain is D(-)-tartrate dehydratase (389 aa).

Substrate contacts are provided by residues Asn21, Asn55, Lys102, Tyr156, Lys182, 182 to 184 (KMK), 213 to 215 (DAN), Glu239, Glu265, His322, and 341 to 343 (ESY). Lys184 functions as the acceptor in the catalytic mechanism. Positions 213, 239, and 265 each coordinate Mg(2+). The active-site Proton donor/acceptor is the His322.

Belongs to the mandelate racemase/muconate lactonizing enzyme family. As to quaternary structure, homooctamer; tetramer of dimers. The cofactor is Mg(2+).

The enzyme catalyses (S,S)-tartrate = oxaloacetate + H2O. In terms of biological role, catalyzes the dehydration of D-tartrate to oxaloacetate. This chain is D(-)-tartrate dehydratase (tarD), found in Bradyrhizobium diazoefficiens (strain JCM 10833 / BCRC 13528 / IAM 13628 / NBRC 14792 / USDA 110).